A 363-amino-acid chain; its full sequence is Pyruvate dehydrogenase E1 component subunit alpha, mitochondrial (363 aa).

The transit peptide at 1–2 directs the protein to the mitochondrion; it reads RN. An N6-acetyllysine; alternate modification is found at Lys36. Lys36 is subject to N6-succinyllysine; alternate. Residues His65, Tyr91, Arg92, Ala130, Gly138, Val140, Asp169, Gly170, Ala171, Asn198, and Tyr200 each contribute to the pyruvate site. 2 residues coordinate thiamine diphosphate: Tyr91 and Arg92. Residues Gly138, Val140, Asp169, Gly170, Ala171, and Asn198 each coordinate thiamine diphosphate. A Mg(2+)-binding site is contributed by Asp169. 2 residues coordinate Mg(2+): Asn198 and Tyr200. At Ser205 the chain carries Phosphoserine; by PDK1. Lys217 bears the N6-acetyllysine; alternate mark. The residue at position 217 (Lys217) is an N6-succinyllysine; alternate. An N6-acetyllysine modification is found at Lys240. Residue Lys250 is modified to N6-succinyllysine. His265 contacts thiamine diphosphate. Position 266 is a phosphoserine; by PDK1, PDK2, PDK3 and PDK4 (Ser266). At Ser268 the chain carries Phosphoserine. At Ser273 the chain carries Phosphoserine; by PDK1, PDK2, PDK3 and PDK4. Tyr274 is modified (phosphotyrosine). At Lys286 the chain carries N6-acetyllysine; alternate. Residue Lys286 is modified to N6-succinyllysine; alternate. Residues Lys294 and Lys309 each carry the N6-acetyllysine modification. Residue Lys358 is modified to N6-succinyllysine.

In terms of assembly, heterotetramer of two PDHA1 and two PDHB subunits. The heterotetramer interacts with DLAT, and is part of the multimeric pyruvate dehydrogenase complex that contains multiple copies of pyruvate dehydrogenase (E1), dihydrolipoamide acetyltransferase (DLAT, E2) and lipoamide dehydrogenase (DLD, E3). These subunits are bound to an inner core composed of about 48 DLAT and 12 PDHX molecules. It depends on thiamine diphosphate as a cofactor. The cofactor is Mg(2+). In terms of processing, phosphorylation at Ser-205, Ser-266 and Ser-273 by PDK family kinases inactivates the enzyme; for this phosphorylation at a single site is sufficient. Phosphorylation at Ser-266 interferes with access to active site, and thereby inactivates the enzyme. Dephosphorylation at all three sites, i.e. at Ser-205, Ser-266 and Ser-273, is required for reactivation. Acetylation alters the phosphorylation pattern. Deacetylated by SIRT3.

Its subcellular location is the mitochondrion matrix. The catalysed reaction is N(6)-[(R)-lipoyl]-L-lysyl-[protein] + pyruvate + H(+) = N(6)-[(R)-S(8)-acetyldihydrolipoyl]-L-lysyl-[protein] + CO2. With respect to regulation, pyruvate dehydrogenase activity is inhibited by phosphorylation of PDHA1; it is reactivated by dephosphorylation. Functionally, the pyruvate dehydrogenase complex catalyzes the overall conversion of pyruvate to acetyl-CoA and CO(2), and thereby links the glycolytic pathway to the tricarboxylic cycle. This chain is Pyruvate dehydrogenase E1 component subunit alpha, mitochondrial (PDHA), found in Sminthopsis macroura (Stripe-faced dunnart).